Here is a 361-residue protein sequence, read N- to C-terminus: 3-isopropylmalate dehydrogenase (361 aa).

Residue 78-91 coordinates NAD(+); sequence GTQWDSLPRHLRPE. Residues Arg-98, Arg-108, Arg-136, and Asp-226 each contribute to the substrate site. Mg(2+) is bound by residues Asp-226, Asp-250, and Asp-254. 284 to 296 is an NAD(+) binding site; sequence GSAPDIAGQDKAN.

The protein belongs to the isocitrate and isopropylmalate dehydrogenases family. LeuB type 1 subfamily. Homodimer. It depends on Mg(2+) as a cofactor. Requires Mn(2+) as cofactor.

It is found in the cytoplasm. It catalyses the reaction (2R,3S)-3-isopropylmalate + NAD(+) = 4-methyl-2-oxopentanoate + CO2 + NADH. It functions in the pathway amino-acid biosynthesis; L-leucine biosynthesis; L-leucine from 3-methyl-2-oxobutanoate: step 3/4. Functionally, catalyzes the oxidation of 3-carboxy-2-hydroxy-4-methylpentanoate (3-isopropylmalate) to 3-carboxy-4-methyl-2-oxopentanoate. The product decarboxylates to 4-methyl-2 oxopentanoate. This Thermosynechococcus vestitus (strain NIES-2133 / IAM M-273 / BP-1) protein is 3-isopropylmalate dehydrogenase.